A 280-amino-acid chain; its full sequence is Sulfur carrier protein FdhD (280 aa).

Cysteine 121 acts as the Cysteine persulfide intermediate in catalysis. 258 to 263 (FSRPGR) contacts Mo-bis(molybdopterin guanine dinucleotide).

The protein belongs to the FdhD family.

Its subcellular location is the cytoplasm. Its function is as follows. Required for formate dehydrogenase (FDH) activity. Acts as a sulfur carrier protein that transfers sulfur from IscS to the molybdenum cofactor prior to its insertion into FDH. The chain is Sulfur carrier protein FdhD from Cronobacter sakazakii (strain ATCC BAA-894) (Enterobacter sakazakii).